We begin with the raw amino-acid sequence, 273 residues long: Protein ALUMINUM SENSITIVE 3 (273 aa).

Transmembrane regions (helical) follow at residues 14–34 (WLIV…VVLL), 51–71 (IYSV…LQFI), 76–96 (NSGW…YTAG), 107–127 (YVAG…LVLL), 136–156 (YMIP…GVTM), 191–213 (ALVI…SLPG), and 228–248 (AIQL…VSSI).

This sequence belongs to the UPF0014 family. Expressed in roots, leaves, stems, and flowers.

It is found in the cell membrane. In terms of biological role, required for aluminum (Al) resistance/tolerance, probably by translocating Al from sensitive tissues such as growing roots to tissues less sensisitive to the toxic effects of Al. In Arabidopsis thaliana (Mouse-ear cress), this protein is Protein ALUMINUM SENSITIVE 3 (ALS3).